The following is a 2371-amino-acid chain: Highly reducing polyketide synthase ntnH (2371 aa).

Positions 10–429 constitute a Ketosynthase family 3 (KS3) domain; it reads PSPIAIVGIG…GANAHVILEG (420 aa). Active-site for beta-ketoacyl synthase activity residues include C180, H316, and H352. Positions 528–796 are malonyl-CoA:ACP transacylase (MAT) domain; the sequence is FIFTGQGAQW…NSCLSRGADA (269 aa). The N-terminal hotdog fold stretch occupies residues 858–986; it reads HELLGARVIG…GKVHPGNAST (129 aa). A dehydratase (DH) domain region spans residues 858–1142; the sequence is HELLGARVIG…GIRFRILENN (285 aa). One can recognise a PKS/mFAS DH domain in the interval 858 to 1145; that stretch reads HELLGARVIG…FRILENNRSK (288 aa). Residue H890 is the Proton acceptor; for dehydratase activity of the active site. A C-terminal hotdog fold region spans residues 1001–1145; it reads VRGVISAKWY…FRILENNRSK (145 aa). D1059 (proton donor; for dehydratase activity) is an active-site residue. Residues 1309 to 1456 are methyltransferase (CMet) domain; it reads FFQLLGHNKK…FENVTAIMDQ (148 aa). Residues 1669 to 1968 are enoyl reductase (ER) (ER) domain; it reads GLLSSLQWQG…GHRPIGAICI (300 aa). Positions 1993 to 2167 are ketoreductase (KR) domain; that stretch reads SYVLIGGLGG…ASVIDLGVME (175 aa). One can recognise a Carrier domain in the interval 2280–2362; the sequence is EDETAVAEFL…DLGKLARSRI (83 aa). S2322 carries the post-translational modification O-(pantetheine 4'-phosphoryl)serine.

It participates in secondary metabolite biosynthesis; terpenoid biosynthesis. Functionally, highly reducing polyketide synthase; part of the gene cluster that mediates the biosynthesis of the meroterpenoids nectripenoids A and B, as well as cochliquninone D and isocochliquninone E. The pathway probably begins with the HR-PKS ntnH that catalyzes two chain-extension steps to form a reduced triketide, which then primes the SAT domain in the NR-PKS ntnG to initiate three more cycles of extension to give a linear hexaketide corresponding to the polyketide part of nectripenoids. The FAD-dependent monooxygenase ntnJ then performs an oxidative decarboxylation at C11 of the ntnH/ntnG product, via an electrophilic aromatic hydroxylation with concomitant ipso-decarboxylation. The membrane-bound polyprenyl transferase ntnF then introduces a farnesyl group before the FAD-dependent monooxygenase ntnK functions as the first epoxidase on terminal C12'-C13' olefin, followed by a second epoxidation on C7'-C8' catalyzed by ntnA. The terpene cyclase/mutase ntnI then initiates the sequential tricyclic ring formation through protonation of the terminal epoxide and catalyzes the regioselective and stereoselective 6/6/6-tricyclic ring formation. The cytochrome P450 monooxygenase ntnM may then hydroxylate C1'. The protein is Highly reducing polyketide synthase ntnH of Nectria sp.